The chain runs to 448 residues: UDP-N-acetylglucosamine--dolichyl-phosphate N-acetylglucosaminephosphotransferase (448 aa).

The chain crosses the membrane as a helical span at residues alanine 24 to proline 44. Residues lysine 58 to leucine 60 and glutamate 70 contribute to the UDP-N-acetyl-alpha-D-glucosamine site. A run of 2 helical transmembrane segments spans residues isoleucine 72–phenylalanine 92 and tyrosine 129–phenylalanine 149. Lysine 156 is a binding site for dolichyl phosphate. 2 consecutive transmembrane segments (helical) span residues phenylalanine 157–valine 177 and tyrosine 202–valine 222. Isoleucine 210 to isoleucine 218 is a dolichyl phosphate binding site. Asparagine 217 is a binding site for Mg(2+). Asparagine 223 serves as a coordination point for UDP-N-acetyl-alpha-D-glucosamine. Transmembrane regions (helical) follow at residues isoleucine 231–alanine 251, histidine 256–tryptophan 276, valine 283–leucine 303, and threonine 309–phenylalanine 329. Aspartate 287 is a binding site for Mg(2+). Arginine 336–arginine 338 provides a ligand contact to UDP-N-acetyl-alpha-D-glucosamine. The next 2 helical transmembrane spans lie at glutamate 387 to methionine 407 and leucine 419 to phenylalanine 439.

This sequence belongs to the glycosyltransferase 4 family. Mg(2+) is required as a cofactor.

The protein resides in the endoplasmic reticulum membrane. It carries out the reaction a di-trans,poly-cis-dolichyl phosphate + UDP-N-acetyl-alpha-D-glucosamine = an N-acetyl-alpha-D-glucosaminyl-diphospho-di-trans,poly-cis-dolichol + UMP. It functions in the pathway protein modification; protein glycosylation. With respect to regulation, inhibited by natural nucleoside antibiotic tunicamycin, which acts as a structural analog and competitor of UDP-GlcNAc. In terms of biological role, UDP-N-acetylglucosamine--dolichyl-phosphate N-acetylglucosaminephosphotransferase that operates in the biosynthetic pathway of dolichol-linked oligosaccharides, the glycan precursors employed in protein asparagine (N)-glycosylation. The assembly of dolichol-linked oligosaccharides begins on the cytosolic side of the endoplasmic reticulum membrane and finishes in its lumen. The sequential addition of sugars to dolichol pyrophosphate produces dolichol-linked oligosaccharides containing fourteen sugars, including two GlcNAcs, nine mannoses and three glucoses. Once assembled, the oligosaccharide is transferred from the lipid to nascent proteins by oligosaccharyltransferases. Catalyzes the initial step of dolichol-linked oligosaccharide biosynthesis, transfering GlcNAc-1-P from cytosolic UDP-GlcNAc onto the carrier lipid dolichyl phosphate (P-dolichol), yielding GlcNAc-P-P-dolichol embedded in the cytoplasmic leaflet of the endoplasmic reticulum membrane. The protein is UDP-N-acetylglucosamine--dolichyl-phosphate N-acetylglucosaminephosphotransferase (ALG7) of Saccharomyces cerevisiae (strain ATCC 204508 / S288c) (Baker's yeast).